Here is a 912-residue protein sequence, read N- to C-terminus: Lateral signaling target protein 2 homolog (912 aa).

A compositionally biased stretch (low complexity) spans 323–332; the sequence is NVNTSNNSDN. Disordered stretches follow at residues 323 to 360, 455 to 610, 664 to 745, and 769 to 846; these read NVNT…SSFY, ADSG…ESSQ, NSSP…ASSA, and GGGS…APPR. Basic and acidic residues predominate over residues 333 to 355; it reads SDSRVDDSPNDELRHESETRDNR. Over residues 455–468 the composition is skewed to polar residues; that stretch reads ADSGLGTANPSVDN. Positions 486–505 are enriched in acidic residues; it reads SSEEGEIDEYDNEEDDEDSD. Basic residues predominate over residues 530-544; that stretch reads YRTHKQQHHHRHRRS. 2 stretches are compositionally biased toward polar residues: residues 545–556 and 572–590; these read SGSIMSATSSRK and VPSN…DTSP. Over residues 591 to 610 the composition is skewed to low complexity; the sequence is SSGNQSECSSTSSTTGESSQ. Basic and acidic residues predominate over residues 682-699; that stretch reads DKPKEPDPTDLFEFRASE. 4 stretches are compositionally biased toward polar residues: residues 705–717, 735–745, 780–801, and 822–834; these read PGQN…QSIY, PGTSPIRASSA, ERSV…ATDS, and SRSS…NGTS. Residues 850 to 910 form an FYVE-type zinc finger; that stretch reads DGDAPRCMAC…VCRDCYVREV (61 aa). Residues C856, C859, C872, C875, C880, C883, C902, and C905 each coordinate Zn(2+).

This sequence belongs to the lst-2 family.

Negative regulator of epidermal growth factor receptor (EGFR) signaling. The polypeptide is Lateral signaling target protein 2 homolog (Aedes aegypti (Yellowfever mosquito)).